The chain runs to 162 residues: tRNA (cytidine(34)-2'-O)-methyltransferase (162 aa).

Residues L83, G105, I127, and S135 each contribute to the S-adenosyl-L-methionine site.

It belongs to the class IV-like SAM-binding methyltransferase superfamily. RNA methyltransferase TrmH family. TrmL subfamily. In terms of assembly, homodimer.

It is found in the cytoplasm. It carries out the reaction cytidine(34) in tRNA + S-adenosyl-L-methionine = 2'-O-methylcytidine(34) in tRNA + S-adenosyl-L-homocysteine + H(+). It catalyses the reaction 5-carboxymethylaminomethyluridine(34) in tRNA(Leu) + S-adenosyl-L-methionine = 5-carboxymethylaminomethyl-2'-O-methyluridine(34) in tRNA(Leu) + S-adenosyl-L-homocysteine + H(+). Its function is as follows. Methylates the ribose at the nucleotide 34 wobble position in the two leucyl isoacceptors tRNA(Leu)(CmAA) and tRNA(Leu)(cmnm5UmAA). Catalyzes the methyl transfer from S-adenosyl-L-methionine to the 2'-OH of the wobble nucleotide. In Photorhabdus asymbiotica subsp. asymbiotica (strain ATCC 43949 / 3105-77) (Xenorhabdus luminescens (strain 2)), this protein is tRNA (cytidine(34)-2'-O)-methyltransferase.